Here is a 428-residue protein sequence, read N- to C-terminus: Cytochrome c biogenesis protein CcsB (428 aa).

Helical transmembrane passes span Leu14–Ile34, Ser72–Arg92, and Leu162–Asn182.

The protein belongs to the Ccs1/CcsB family. As to quaternary structure, may interact with CcsA.

It localises to the cellular thylakoid membrane. Functionally, required during biogenesis of c-type cytochromes (cytochrome c6 and cytochrome f) at the step of heme attachment. In Prochlorococcus marinus subsp. pastoris (strain CCMP1986 / NIES-2087 / MED4), this protein is Cytochrome c biogenesis protein CcsB.